The following is a 176-amino-acid chain: Peptide deformylase (176 aa).

Residues cysteine 94 and histidine 136 each contribute to the Fe cation site. Glutamate 137 is a catalytic residue. Position 140 (histidine 140) interacts with Fe cation.

This sequence belongs to the polypeptide deformylase family. The cofactor is Fe(2+).

It carries out the reaction N-terminal N-formyl-L-methionyl-[peptide] + H2O = N-terminal L-methionyl-[peptide] + formate. Removes the formyl group from the N-terminal Met of newly synthesized proteins. Requires at least a dipeptide for an efficient rate of reaction. N-terminal L-methionine is a prerequisite for activity but the enzyme has broad specificity at other positions. The sequence is that of Peptide deformylase from Bartonella quintana (strain Toulouse) (Rochalimaea quintana).